The following is a 578-amino-acid chain: G protein-coupled receptor kinase 4 (578 aa).

Met-1 carries the N-acetylmethionine modification. Residues 1 to 154 (MELENIVANS…ECTRVAHNYL (154 aa)) are N-terminal. One can recognise an RGS domain in the interval 52–172 (DYSSLCDKQP…QESSYFSQFL (121 aa)). Positions 187 to 449 (FRHYRVLGKG…AAGVKQHPVF (263 aa)) constitute a Protein kinase domain. ATP contacts are provided by residues 193–201 (LGKGGFGEV) and Lys-216. Residue Asp-312 is the Proton acceptor of the active site. An AGC-kinase C-terminal domain is found at 450 to 515 (KDINFRRLEA…GCVSIPWQNE (66 aa)). A Phosphoserine modification is found at Ser-485.

This sequence belongs to the protein kinase superfamily. AGC Ser/Thr protein kinase family. GPRK subfamily. Interacts with DRD3. Post-translationally, palmitoylated. As to expression, isoform 1, isoform 2, isoform 3, and isoform 4 are expressed in testis. Isoform 4 is expressed in myometrium.

The protein localises to the cytoplasm. It localises to the cell cortex. The catalysed reaction is [G-protein-coupled receptor] + ATP = [G-protein-coupled receptor]-phosphate + ADP + H(+). With respect to regulation, inhibited by heparin. In terms of biological role, specifically phosphorylates the activated forms of G protein-coupled receptors. GRK4-alpha can phosphorylate rhodopsin and its activity is inhibited by calmodulin; the other three isoforms do not phosphorylate rhodopsin and do not interact with calmodulin. GRK4-alpha and GRK4-gamma phosphorylate DRD3. Phosphorylates ADRB2. This Homo sapiens (Human) protein is G protein-coupled receptor kinase 4 (GRK4).